The following is a 352-amino-acid chain: Inner membrane protein YeeA (352 aa).

Residues 1 to 25 (MRADKSLSPFEIRVYRHYRIVHGTR) are Cytoplasmic-facing. 2 helical membrane-spanning segments follow: residues 26–46 (VALA…PEST) and 47–67 (WPLV…NVVP). Residue arginine 68 is a topological domain, cytoplasmic. Residues 69–89 (AFERIGGTVLGSILGLIALQL) traverse the membrane as a helical segment. Position 90 (glutamate 90) is a topological domain, periplasmic. Residues 91 to 111 (LISLPLMLVWCAAAMFLCGWL) form a helical membrane-spanning segment. The Cytoplasmic segment spans residues 112–117 (ALGKKP). The chain crosses the membrane as a helical span at residues 118–138 (YQGLLIGVTLAIVVGSPTGEI). Residues 139 to 147 (DTALWRSGD) are Periplasmic-facing. The helical transmembrane segment at 148–168 (VILGSLLAMLFTGIWPQRAFI) threads the bilayer. At 169 to 352 (HWRIQLAKSL…SNLICRALRK (184 aa)) the chain is on the cytoplasmic side.

Its subcellular location is the cell inner membrane. This is Inner membrane protein YeeA (yeeA) from Escherichia coli (strain K12).